The primary structure comprises 48 residues: Large ribosomal subunit protein bL34c (48 aa).

Positions 18-48 (SGFRSRMATPQGRKTIRNRRKKGRKNLTLRR) are disordered. A compositionally biased stretch (basic residues) spans 31-48 (KTIRNRRKKGRKNLTLRR).

Belongs to the bacterial ribosomal protein bL34 family.

It localises to the plastid. Its subcellular location is the chloroplast. This Phaeodactylum tricornutum (strain CCAP 1055/1) protein is Large ribosomal subunit protein bL34c.